Reading from the N-terminus, the 125-residue chain is Glycine cleavage system H protein (125 aa).

A Lipoyl-binding domain is found at 19 to 101 (GAVVGITDFA…NGSGWFFKLT (83 aa)). The residue at position 60 (Lys-60) is an N6-lipoyllysine.

The protein belongs to the GcvH family. In terms of assembly, the glycine cleavage system is composed of four proteins: P, T, L and H. (R)-lipoate is required as a cofactor.

Functionally, the glycine cleavage system catalyzes the degradation of glycine. The H protein shuttles the methylamine group of glycine from the P protein to the T protein. The polypeptide is Glycine cleavage system H protein (Methylocella silvestris (strain DSM 15510 / CIP 108128 / LMG 27833 / NCIMB 13906 / BL2)).